The chain runs to 63 residues: Large ribosomal subunit protein bL32c (63 aa).

A disordered region spans residues 39-63; that stretch reads SFSSGNEHPKPKGFSGQQTNNKIFE. The span at 53 to 63 shows a compositional bias: polar residues; the sequence is SGQQTNNKIFE.

Belongs to the bacterial ribosomal protein bL32 family.

The protein resides in the plastid. It is found in the chloroplast. The polypeptide is Large ribosomal subunit protein bL32c (Triticum aestivum (Wheat)).